The following is a 1008-amino-acid chain: G protein-regulated inducer of neurite outgrowth 1 (1008 aa).

Residues 1–859 are disordered; the sequence is MDTAEDPAWL…SPPSRRDAGL (859 aa). Thr-60 carries the post-translational modification Phosphothreonine. Phosphoserine is present on residues Ser-64 and Ser-75. The span at 117-127 shows a compositional bias: polar residues; that stretch reads ISGTPEATTSG. Composition is skewed to basic and acidic residues over residues 137–159, 167–178, 230–269, and 279–291; these read TEPKSSDDRNPMFLEKMDFKSSK, GKEDPGSSRKAD, PRKEDPGSLRKVDPVSSDKVDPVFPRKEEPRYSGKEHPVS, and EKVDLVLSGKRDP. Ser-237 is modified (phosphoserine). 2 stretches are compositionally biased toward polar residues: residues 326 to 336 and 391 to 406; these read SGKNGPVSSGT and HTDTTASAKTDLTSLK. Phosphoserine is present on residues Ser-436 and Ser-452. The span at 454 to 466 shows a compositional bias: basic and acidic residues; sequence GKEDPVSSRREDP. A compositionally biased stretch (polar residues) spans 481–491; that stretch reads PESSGKTNPVS. Positions 549-559 are enriched in basic and acidic residues; sequence GKEDPVSKGKA. Ser-615 is subject to Phosphoserine. Low complexity predominate over residues 643–656; it reads PGQEGAAAPGEAGA. Over residues 659 to 679 the composition is skewed to basic and acidic residues; the sequence is LKKETPQASEKVDPGSCRKAE. Residue Ser-737 is modified to Phosphoserine. Residues 742 to 752 show a composition bias toward basic and acidic residues; it reads RGSEGRVEPKA. Residues 755-764 are compositionally biased toward polar residues; it reads VSSTEASSLG. At Ser-799 the chain carries Phosphoserine. Residues 838–847 show a composition bias toward low complexity; that stretch reads SAFSFQAAPR. Phosphothreonine is present on Thr-877. A phosphoserine mark is found at Ser-895 and Ser-914. Residues 899 to 1008 form an interaction with GNAO1 region; sequence AAVAPPEPAE…CCSRAGPTAE (110 aa). The tract at residues 943–986 is disordered; that stretch reads ERQIEEHGRQGAPAPPPAARAGPGRSGSVRTAPPDGAAKRPPGL. Position 993 is a phosphoserine (Ser-993). 2 S-palmitoyl cysteine lipidation sites follow: Cys-999 and Cys-1000.

In terms of assembly, interacts with activated forms of GNAI1, GNAO1 and GNAZ. In terms of processing, palmitoylation on Cys-999 and/or Cys-1000 is required for membrane targeting. As to expression, widely expressed in the central nervous system, with highest levels in spinal cord.

The protein resides in the cell membrane. It localises to the cell projection. Its subcellular location is the growth cone. Functionally, may be involved in neurite outgrowth. The sequence is that of G protein-regulated inducer of neurite outgrowth 1 (GPRIN1) from Homo sapiens (Human).